We begin with the raw amino-acid sequence, 559 residues long: Fanconi-associated nuclease 1 homolog (559 aa).

Mn(2+) is bound by residues glutamate 386, aspartate 507, glutamate 522, and valine 523. A VRR-NUC domain is found at 443-555; sequence DGSYRDAIRC…MPVAVCYVRW (113 aa).

It belongs to the FAN1 family. Requires Mn(2+) as cofactor. Mg(2+) serves as cofactor.

It carries out the reaction Hydrolytically removes 5'-nucleotides successively from the 3'-hydroxy termini of 3'-hydroxy-terminated oligonucleotides.. Nuclease required for the repair of DNA interstrand cross-links (ICL). Acts as a 5'-3' exonuclease that anchors at a cut end of DNA and cleaves DNA successively at every third nucleotide, allowing to excise an ICL from one strand through flanking incisions. Also has endonuclease activity toward 5'-flaps. The polypeptide is Fanconi-associated nuclease 1 homolog (Pseudomonas aeruginosa (strain ATCC 15692 / DSM 22644 / CIP 104116 / JCM 14847 / LMG 12228 / 1C / PRS 101 / PAO1)).